We begin with the raw amino-acid sequence, 451 residues long: UDP-N-acetylmuramoylalanine--D-glutamate ligase (451 aa).

118–124 (GSNGKTT) contributes to the ATP binding site.

Belongs to the MurCDEF family.

It localises to the cytoplasm. It catalyses the reaction UDP-N-acetyl-alpha-D-muramoyl-L-alanine + D-glutamate + ATP = UDP-N-acetyl-alpha-D-muramoyl-L-alanyl-D-glutamate + ADP + phosphate + H(+). It participates in cell wall biogenesis; peptidoglycan biosynthesis. In terms of biological role, cell wall formation. Catalyzes the addition of glutamate to the nucleotide precursor UDP-N-acetylmuramoyl-L-alanine (UMA). The chain is UDP-N-acetylmuramoylalanine--D-glutamate ligase from Shouchella clausii (strain KSM-K16) (Alkalihalobacillus clausii).